The chain runs to 674 residues: 1,4-alpha-glucan branching enzyme GlgB 1 (674 aa).

Residue D336 is the Nucleophile of the active site. E389 (proton donor) is an active-site residue.

This sequence belongs to the glycosyl hydrolase 13 family. GlgB subfamily. Monomer.

It catalyses the reaction Transfers a segment of a (1-&gt;4)-alpha-D-glucan chain to a primary hydroxy group in a similar glucan chain.. Its pathway is glycan biosynthesis; glycogen biosynthesis. Catalyzes the formation of the alpha-1,6-glucosidic linkages in glycogen by scission of a 1,4-alpha-linked oligosaccharide from growing alpha-1,4-glucan chains and the subsequent attachment of the oligosaccharide to the alpha-1,6 position. The polypeptide is 1,4-alpha-glucan branching enzyme GlgB 1 (Clostridium perfringens (strain SM101 / Type A)).